We begin with the raw amino-acid sequence, 367 residues long: Quinolinate synthase (367 aa).

2 residues coordinate iminosuccinate: histidine 45 and serine 62. Cysteine 109 provides a ligand contact to [4Fe-4S] cluster. Iminosuccinate is bound by residues tyrosine 140 to asparagine 142 and serine 161. Cysteine 229 contributes to the [4Fe-4S] cluster binding site. Residues histidine 255 to glutamate 257 and threonine 272 contribute to the iminosuccinate site. Position 319 (cysteine 319) interacts with [4Fe-4S] cluster.

Belongs to the quinolinate synthase family. Type 3 subfamily. The cofactor is [4Fe-4S] cluster.

The protein resides in the cytoplasm. It catalyses the reaction iminosuccinate + dihydroxyacetone phosphate = quinolinate + phosphate + 2 H2O + H(+). It functions in the pathway cofactor biosynthesis; NAD(+) biosynthesis; quinolinate from iminoaspartate: step 1/1. In terms of biological role, catalyzes the condensation of iminoaspartate with dihydroxyacetone phosphate to form quinolinate. In Halalkalibacterium halodurans (strain ATCC BAA-125 / DSM 18197 / FERM 7344 / JCM 9153 / C-125) (Bacillus halodurans), this protein is Quinolinate synthase.